Reading from the N-terminus, the 433-residue chain is Trigger factor (433 aa).

The PPIase FKBP-type domain occupies 161-246 (GDRVTMDFVG…AKKVEARDLP (86 aa)).

Belongs to the FKBP-type PPIase family. Tig subfamily.

It is found in the cytoplasm. The catalysed reaction is [protein]-peptidylproline (omega=180) = [protein]-peptidylproline (omega=0). Involved in protein export. Acts as a chaperone by maintaining the newly synthesized protein in an open conformation. Functions as a peptidyl-prolyl cis-trans isomerase. This is Trigger factor from Idiomarina loihiensis (strain ATCC BAA-735 / DSM 15497 / L2-TR).